Here is a 725-residue protein sequence, read N- to C-terminus: Glutamine-dependent NAD(+) synthetase (725 aa).

In terms of domain architecture, CN hydrolase spans 4–274 (LKVATCNLNQ…VEVIISQVDL (271 aa)). E44 acts as the Proton acceptor; for glutaminase activity in catalysis. The active-site For glutaminase activity is K113. The Nucleophile; for glutaminase activity role is filled by C174. The ligase stretch occupies residues 324 to 709 (YHSPQEEIAF…FPEEEANSNK (386 aa)). 354–361 (PLSGGADS) serves as a coordination point for ATP. Residue S356 is part of the active site.

The protein in the C-terminal section; belongs to the NAD synthetase family.

It catalyses the reaction deamido-NAD(+) + L-glutamine + ATP + H2O = L-glutamate + AMP + diphosphate + NAD(+) + H(+). It functions in the pathway cofactor biosynthesis; NAD(+) biosynthesis; NAD(+) from deamido-NAD(+) (L-Gln route): step 1/1. This chain is Glutamine-dependent NAD(+) synthetase, found in Arabidopsis thaliana (Mouse-ear cress).